A 601-amino-acid chain; its full sequence is Elongation factor 4 (601 aa).

The tr-type G domain maps to 6 to 188 (EHIRNFSIIA…EIVRKIPAPE (183 aa)). GTP-binding positions include 18 to 23 (DHGKST) and 135 to 138 (NKID).

The protein belongs to the TRAFAC class translation factor GTPase superfamily. Classic translation factor GTPase family. LepA subfamily.

The protein resides in the cell inner membrane. The catalysed reaction is GTP + H2O = GDP + phosphate + H(+). Functionally, required for accurate and efficient protein synthesis under certain stress conditions. May act as a fidelity factor of the translation reaction, by catalyzing a one-codon backward translocation of tRNAs on improperly translocated ribosomes. Back-translocation proceeds from a post-translocation (POST) complex to a pre-translocation (PRE) complex, thus giving elongation factor G a second chance to translocate the tRNAs correctly. Binds to ribosomes in a GTP-dependent manner. The sequence is that of Elongation factor 4 from Hydrogenovibrio crunogenus (strain DSM 25203 / XCL-2) (Thiomicrospira crunogena).